Reading from the N-terminus, the 295-residue chain is Acetylglutamate kinase (295 aa).

Substrate-binding positions include 70-71 (GG), Arg-92, and Asn-191.

The protein belongs to the acetylglutamate kinase family. ArgB subfamily.

The protein resides in the cytoplasm. It catalyses the reaction N-acetyl-L-glutamate + ATP = N-acetyl-L-glutamyl 5-phosphate + ADP. It participates in amino-acid biosynthesis; L-arginine biosynthesis; N(2)-acetyl-L-ornithine from L-glutamate: step 2/4. Catalyzes the ATP-dependent phosphorylation of N-acetyl-L-glutamate. The chain is Acetylglutamate kinase from Mycolicibacterium paratuberculosis (strain ATCC BAA-968 / K-10) (Mycobacterium paratuberculosis).